The sequence spans 407 residues: Chorismate synthase (407 aa).

Residues Arg-40 and Arg-46 each coordinate NADP(+). FMN is bound by residues 135–137, 256–257, Gly-300, 315–319, and Arg-341; these read RAS, QA, and KPIST.

Belongs to the chorismate synthase family. Homotetramer. FMNH2 serves as cofactor.

It catalyses the reaction 5-O-(1-carboxyvinyl)-3-phosphoshikimate = chorismate + phosphate. It participates in metabolic intermediate biosynthesis; chorismate biosynthesis; chorismate from D-erythrose 4-phosphate and phosphoenolpyruvate: step 7/7. In terms of biological role, catalyzes the anti-1,4-elimination of the C-3 phosphate and the C-6 proR hydrogen from 5-enolpyruvylshikimate-3-phosphate (EPSP) to yield chorismate, which is the branch point compound that serves as the starting substrate for the three terminal pathways of aromatic amino acid biosynthesis. This reaction introduces a second double bond into the aromatic ring system. The protein is Chorismate synthase of Mycobacterium leprae (strain Br4923).